The following is a 97-amino-acid chain: UPF0235 protein Aasi_0294 (97 aa).

It belongs to the UPF0235 family.

The protein is UPF0235 protein Aasi_0294 of Amoebophilus asiaticus (strain 5a2).